The chain runs to 107 residues: U1-lycotoxin-Ls1b (107 aa).

A signal peptide spans 1 to 20 (MMKVLVVVALLVTLISYSSS). Positions 21–41 (EGIDDLEADELLSLMANEQTR) are excised as a propeptide. Disulfide bonds link Cys44–Cys59, Cys51–Cys68, Cys58–Cys86, and Cys70–Cys84.

The protein belongs to the neurotoxin 19 (CSTX) family. 04 (U1-Lctx) subfamily. In terms of tissue distribution, expressed by the venom gland.

The protein resides in the secreted. The protein is U1-lycotoxin-Ls1b of Lycosa singoriensis (Wolf spider).